The primary structure comprises 168 residues: Small ribosomal subunit protein uS9 (168 aa).

Positions 1–38 (MAKIADSIDSAQADSVENVESYSTETPESAAPAAPRPV) are disordered. The segment covering 9 to 22 (DSAQADSVENVESY) has biased composition (polar residues). Low complexity predominate over residues 23 to 37 (STETPESAAPAAPRP).

The protein belongs to the universal ribosomal protein uS9 family.

This chain is Small ribosomal subunit protein uS9, found in Leifsonia xyli subsp. xyli (strain CTCB07).